The sequence spans 361 residues: Peptide chain release factor 1 (361 aa).

N5-methylglutamine is present on Gln-237. The segment covering Glu-286 to Arg-296 has biased composition (basic and acidic residues). The disordered stretch occupies residues Glu-286–Arg-305.

The protein belongs to the prokaryotic/mitochondrial release factor family. Post-translationally, methylated by PrmC. Methylation increases the termination efficiency of RF1.

Its subcellular location is the cytoplasm. Its function is as follows. Peptide chain release factor 1 directs the termination of translation in response to the peptide chain termination codons UAG and UAA. The sequence is that of Peptide chain release factor 1 from Shewanella pealeana (strain ATCC 700345 / ANG-SQ1).